The sequence spans 82 residues: Small ribosomal subunit protein bS16 (82 aa).

The protein belongs to the bacterial ribosomal protein bS16 family.

The chain is Small ribosomal subunit protein bS16 from Yersinia pseudotuberculosis serotype O:1b (strain IP 31758).